A 176-amino-acid chain; its full sequence is Cathelicidin-2 (176 aa).

An N-terminal signal peptide occupies residues 1–29; sequence METQGASLSLGRWSLWLLLLGLVVPLASA. Residue Gln30 is modified to Pyrrolidone carboxylic acid. The propeptide occupies 30–130; it reads QALSYREAVL…DINCNELQSV (101 aa). 2 cysteine pairs are disulfide-bonded: Cys85–Cys96 and Cys107–Cys124. The interval 135 to 176 is disordered; it reads PIRRPPIRPPFNPPFRPPVRPPFRPPFRPPFRPPIGPFPGRR. Residues 141–176 are compositionally biased toward pro residues; sequence IRPPFNPPFRPPVRPPFRPPFRPPFRPPIGPFPGRR. Pro173 is subject to Proline amide. Positions 174–176 are cleaved as a propeptide — removed in mature form; that stretch reads GRR.

It belongs to the cathelicidin family. Elastase is responsible for its maturation.

The protein resides in the secreted. Binds to the lipid A moiety of bacterial lipopolysaccharides (LPS), a glycolipid present in the outer membrane of all Gram-negative bacteria. Shows a potent antimicrobial activity against the Gram-negative bacteria E.coli, S.typhimurium and P.aeruginosa. Less active against the Gram-positive bacteria S.aureus, L.monocytogenes and B.subtilis. The polypeptide is Cathelicidin-2 (CATHL2) (Capra hircus (Goat)).